The following is a 175-amino-acid chain: uncharacterized protein (175 aa).

This sequence belongs to the asfivirus B175L family.

This is an uncharacterized protein from Ornithodoros (relapsing fever ticks).